Here is a 194-residue protein sequence, read N- to C-terminus: Large ribosomal subunit protein bL25 (194 aa).

The protein belongs to the bacterial ribosomal protein bL25 family. CTC subfamily. Part of the 50S ribosomal subunit; part of the 5S rRNA/L5/L18/L25 subcomplex. Contacts the 5S rRNA. Binds to the 5S rRNA independently of L5 and L18.

Its function is as follows. This is one of the proteins that binds to the 5S RNA in the ribosome where it forms part of the central protuberance. This is Large ribosomal subunit protein bL25 from Parabacteroides distasonis (strain ATCC 8503 / DSM 20701 / CIP 104284 / JCM 5825 / NCTC 11152).